The following is a 91-amino-acid chain: Long neurotoxin OH-56 (91 aa).

A signal peptide spans 1 to 21; sequence MKTLLLTLVVVTIMCLDLGYT. Disulfide bonds link Cys24–Cys42, Cys35–Cys63, Cys48–Cys52, Cys67–Cys78, and Cys79–Cys84.

Belongs to the three-finger toxin family. Long-chain subfamily. Type II alpha-neurotoxin sub-subfamily. As to expression, expressed by the venom gland.

It localises to the secreted. In terms of biological role, binds with high affinity to muscular (alpha-1/CHRNA1) and neuronal (alpha-7/CHRNA7) nicotinic acetylcholine receptor (nAChR) and inhibits acetylcholine from binding to the receptor, thereby impairing neuromuscular and neuronal transmission. The sequence is that of Long neurotoxin OH-56 from Ophiophagus hannah (King cobra).